The sequence spans 146 residues: Ecotin-like protein 1 (146 aa).

It belongs to the protease inhibitor I11 (ecotin) family.

The sequence is that of Ecotin-like protein 1 (ISP1) from Leishmania braziliensis.